Reading from the N-terminus, the 699-residue chain is Lutropin-choriogonadotropic hormone receptor (699 aa).

Positions 1–26 (MKQRFSALQLLKLLLLLQPPLPRALR) are cleaved as a signal peptide. The region spanning 27–66 (EALCPEPCNCVPDGALRCPGPTAGLTRLSLAYLPVKVIPS) is the LRRNT domain. Residues 27 to 363 (EALCPEPCNC…EDIMGYDFLR (337 aa)) are Extracellular-facing. LRR repeat units lie at residues 96-115 (NLLN…RYIE), 124-145 (RLKY…TKVF), and 149-171 (SNFI…AFQG). Asn-99 carries an N-linked (GlcNAc...) asparagine glycan. N-linked (GlcNAc...) asparagine glycosylation is found at Asn-174 and Asn-195. 3 LRR repeats span residues 175–196 (ESVT…AFNG), 198–220 (TLTS…AFRG), and 223–244 (GPKT…GLES). N-linked (GlcNAc...) asparagine glycosylation is found at Asn-291, Asn-299, and Asn-313. The residue at position 331 (Tyr-331) is a Sulfotyrosine. The chain crosses the membrane as a helical span at residues 364–385 (VLIWLINILAIMGNMTVLFVLL). Residues 386-395 (TSRYKLTVPR) lie on the Cytoplasmic side of the membrane. The helical transmembrane segment at 396–416 (FLMCNLSFADFCMGLYLLLIA) threads the bilayer. Over 417–439 (SVDSQTKGQYYNHAIDWQTGSGC) the chain is Extracellular. An intrachain disulfide couples Cys-439 to Cys-514. The helical transmembrane segment at 440–462 (STAGFFTVFASELSVYTLTVITL) threads the bilayer. Residues 463 to 482 (ERWHTITYAIHLDQKLRLRH) are Cytoplasmic-facing. A helical membrane pass occupies residues 483–505 (AILIMLGGWLFSSLIAMLPLVGV). Over 506 to 525 (SNYMKVSICFPMDVETTLSQ) the chain is Extracellular. The helical transmembrane segment at 526–549 (VYILTILILNVVAFFIICACYIKI) threads the bilayer. The Cytoplasmic segment spans residues 550–570 (YFAVRNPELMATNKDTKIAKK). Residues 571-594 (MAILIFTDFTCMAPISFFAISAAF) form a helical membrane-spanning segment. At 595–605 (KVPLITVTNSK) the chain is on the extracellular side. A helical transmembrane segment spans residues 606 to 627 (VLLVLFYPINSCANPFLYAIFT). Residues 628–699 (KTFQRDFFLL…LLDKTRYTEC (72 aa)) are Cytoplasmic-facing. 2 S-palmitoyl cysteine lipidation sites follow: Cys-643 and Cys-644.

This sequence belongs to the G-protein coupled receptor 1 family. FSH/LSH/TSH subfamily. Post-translationally, sulfated. As to expression, gonadal and thyroid cells.

Its subcellular location is the cell membrane. Its function is as follows. Receptor for lutropin-choriogonadotropic hormone. The activity of this receptor is mediated by G proteins which activate adenylate cyclase. In Homo sapiens (Human), this protein is Lutropin-choriogonadotropic hormone receptor (LHCGR).